Consider the following 545-residue polypeptide: Glucose-6-phosphate isomerase (545 aa).

Glu353 functions as the Proton donor in the catalytic mechanism. Active-site residues include His384 and Lys510.

This sequence belongs to the GPI family.

The protein resides in the cytoplasm. It catalyses the reaction alpha-D-glucose 6-phosphate = beta-D-fructose 6-phosphate. Its pathway is carbohydrate biosynthesis; gluconeogenesis. It functions in the pathway carbohydrate degradation; glycolysis; D-glyceraldehyde 3-phosphate and glycerone phosphate from D-glucose: step 2/4. Functionally, catalyzes the reversible isomerization of glucose-6-phosphate to fructose-6-phosphate. The polypeptide is Glucose-6-phosphate isomerase (Aromatoleum aromaticum (strain DSM 19018 / LMG 30748 / EbN1) (Azoarcus sp. (strain EbN1))).